Reading from the N-terminus, the 206-residue chain is Probable glutathione peroxidase 3, mitochondrial (206 aa).

Residues 1-12 (MPRSSRWVNQRA) constitute a mitochondrion transit peptide. Cysteine 80 is an active-site residue.

It belongs to the glutathione peroxidase family. As to quaternary structure, interacts with ABI1 and ABI2. Ubiquitous.

The protein resides in the mitochondrion. The catalysed reaction is 2 glutathione + H2O2 = glutathione disulfide + 2 H2O. The redox states are modulated by H(2)O(2). May constitute a glutathione peroxidase-like protective system against oxidative stresses. Involved positively in abscisic acid (ABA) signaling pathway that regulates numerous ABA responses, such as stomatal closure, seed germination and inhibition of vegetative growth. Oxidizes and represses target proteins (e.g. the phosphatase activity of ABI1 and ABI2) when oxidized by H(2)O(2), probably after ABA signaling. Modulates the calcium channel activity in guard cells in response to ABA or H(2)O(2). Confers tolerance to drought stress, by enhancing the ABA-dependent stomatal closure. This is Probable glutathione peroxidase 3, mitochondrial (GPX3) from Arabidopsis thaliana (Mouse-ear cress).